A 236-amino-acid polypeptide reads, in one-letter code: 7-cyano-7-deazaguanine synthase (236 aa).

7–17 contacts ATP; that stretch reads CSGGLDSVSLA. Zn(2+) contacts are provided by Cys-185, Cys-193, Cys-196, and Cys-199.

Belongs to the QueC family. Zn(2+) serves as cofactor.

The enzyme catalyses 7-carboxy-7-deazaguanine + NH4(+) + ATP = 7-cyano-7-deazaguanine + ADP + phosphate + H2O + H(+). It participates in purine metabolism; 7-cyano-7-deazaguanine biosynthesis. Catalyzes the ATP-dependent conversion of 7-carboxy-7-deazaguanine (CDG) to 7-cyano-7-deazaguanine (preQ(0)). This is 7-cyano-7-deazaguanine synthase from Rhizobium leguminosarum bv. trifolii (strain WSM2304).